Here is a 275-residue protein sequence, read N- to C-terminus: MAVIKCKPTSPGRRHVVKVVNSDLHKGKPFAGLLAKKSKSGGRNNTGRITSRHIGGGHKQHYRLIDFKRNKDGIPAKVERLEYDPNRTANIALVLYADGERRYIIAAKGMKAGDSIQSGIDAEIKSGNAMPLRNIPVGSVVHAVEMKPGKGAQIARSAGAYVQVIARDGAYATLRLRSGEMRKVPVDCRATLGEVGNAEHMLRQLGKAGAKRWRGVRPTVRGVAMNPVDHPHGGGEGRTSGGRHPVSPWGQPTKGYKTRSNKRTDKYIVRRRNKK.

The disordered stretch occupies residues 223 to 275; that stretch reads VAMNPVDHPHGGGEGRTSGGRHPVSPWGQPTKGYKTRSNKRTDKYIVRRRNKK.

Belongs to the universal ribosomal protein uL2 family. In terms of assembly, part of the 50S ribosomal subunit. Forms a bridge to the 30S subunit in the 70S ribosome.

Its function is as follows. One of the primary rRNA binding proteins. Required for association of the 30S and 50S subunits to form the 70S ribosome, for tRNA binding and peptide bond formation. It has been suggested to have peptidyltransferase activity; this is somewhat controversial. Makes several contacts with the 16S rRNA in the 70S ribosome. In Shewanella piezotolerans (strain WP3 / JCM 13877), this protein is Large ribosomal subunit protein uL2.